A 211-amino-acid chain; its full sequence is HTH-type transcriptional repressor FabR (211 aa).

In terms of domain architecture, HTH tetR-type spans 10–70; the sequence is RTRRSLVEAA…TMVDESGLML (61 aa). Positions 33–52 form a DNA-binding region, H-T-H motif; that stretch reads SLREVAREAGIAPTSFYRHF.

In terms of assembly, homodimer.

It is found in the cytoplasm. Its function is as follows. Represses the transcription of fabB, involved in unsaturated fatty acid (UFA) biosynthesis. By controlling UFA production, FabR directly influences the physical properties of the membrane bilayer. This Cronobacter sakazakii (strain ATCC BAA-894) (Enterobacter sakazakii) protein is HTH-type transcriptional repressor FabR.